The chain runs to 530 residues: Type 2 DNA topoisomerase 6 subunit B (530 aa).

ATP is bound by residues N42, D76, 97 to 98 (SK), 106 to 113 (GMYGLGVK), and K427.

It belongs to the TOP6B family. Homodimer. Heterotetramer of two Top6A and two Top6B chains.

The catalysed reaction is ATP-dependent breakage, passage and rejoining of double-stranded DNA.. Relaxes both positive and negative superturns and exhibits a strong decatenase activity. In Saccharolobus islandicus (strain Y.N.15.51 / Yellowstone #2) (Sulfolobus islandicus), this protein is Type 2 DNA topoisomerase 6 subunit B.